The sequence spans 337 residues: 1-aminocyclopropane-1-carboxylate deaminase (337 aa).

The residue at position 50 (Lys-50) is an N6-(pyridoxal phosphate)lysine. The Nucleophile role is filled by Ser-77.

This sequence belongs to the ACC deaminase/D-cysteine desulfhydrase family. Homotrimer. Pyridoxal 5'-phosphate serves as cofactor.

The enzyme catalyses 1-aminocyclopropane-1-carboxylate + H2O = 2-oxobutanoate + NH4(+). Functionally, catalyzes a cyclopropane ring-opening reaction, the irreversible conversion of 1-aminocyclopropane-1-carboxylate (ACC) to ammonia and alpha-ketobutyrate. Allows growth on ACC as a nitrogen source. The sequence is that of 1-aminocyclopropane-1-carboxylate deaminase from Methylobacterium sp. (strain 4-46).